We begin with the raw amino-acid sequence, 301 residues long: tRNA dimethylallyltransferase (301 aa).

2–9 (GPTASGKT) is a binding site for ATP. 4 to 9 (TASGKT) provides a ligand contact to substrate. 2 interaction with substrate tRNA regions span residues 27–30 (DSAM) and 151–155 (QRIQR).

This sequence belongs to the IPP transferase family. As to quaternary structure, monomer. It depends on Mg(2+) as a cofactor.

The catalysed reaction is adenosine(37) in tRNA + dimethylallyl diphosphate = N(6)-dimethylallyladenosine(37) in tRNA + diphosphate. Functionally, catalyzes the transfer of a dimethylallyl group onto the adenine at position 37 in tRNAs that read codons beginning with uridine, leading to the formation of N6-(dimethylallyl)adenosine (i(6)A). The protein is tRNA dimethylallyltransferase of Coxiella burnetii (strain CbuK_Q154) (Coxiella burnetii (strain Q154)).